A 328-amino-acid chain; its full sequence is DNA-directed RNA polymerase subunit alpha (328 aa).

The alpha N-terminal domain (alpha-NTD) stretch occupies residues 1-233; that stretch reads MHNSATEFLK…EQLEAFIDLR (233 aa). Residues 247-328 form an alpha C-terminal domain (alpha-CTD) region; it reads FDPVLLRPVD…WPPVSILKND (82 aa).

This sequence belongs to the RNA polymerase alpha chain family. As to quaternary structure, homodimer. The RNAP catalytic core consists of 2 alpha, 1 beta, 1 beta' and 1 omega subunit. When a sigma factor is associated with the core the holoenzyme is formed, which can initiate transcription.

It carries out the reaction RNA(n) + a ribonucleoside 5'-triphosphate = RNA(n+1) + diphosphate. In terms of biological role, DNA-dependent RNA polymerase catalyzes the transcription of DNA into RNA using the four ribonucleoside triphosphates as substrates. In Wigglesworthia glossinidia brevipalpis, this protein is DNA-directed RNA polymerase subunit alpha.